We begin with the raw amino-acid sequence, 171 residues long: Regulator of ribonuclease activity A (171 aa).

This sequence belongs to the RraA family. As to quaternary structure, homotrimer. Binds to both RNA-binding sites in the C-terminal region of Rne and to RhlB.

The protein localises to the cytoplasm. Functionally, globally modulates RNA abundance by binding to RNase E (Rne) and regulating its endonucleolytic activity. Can modulate Rne action in a substrate-dependent manner by altering the composition of the degradosome. Modulates RNA-binding and helicase activities of the degradosome. The protein is Regulator of ribonuclease activity A of Vibrio cholerae serotype O1 (strain ATCC 39315 / El Tor Inaba N16961).